The sequence spans 906 residues: Aconitate hydratase A (906 aa).

Positions 443, 509, and 512 each coordinate [4Fe-4S] cluster.

It belongs to the aconitase/IPM isomerase family. As to quaternary structure, monomer. [4Fe-4S] cluster is required as a cofactor.

It catalyses the reaction citrate = D-threo-isocitrate. It carries out the reaction (2S,3R)-3-hydroxybutane-1,2,3-tricarboxylate = 2-methyl-cis-aconitate + H2O. It participates in carbohydrate metabolism; tricarboxylic acid cycle; isocitrate from oxaloacetate: step 2/2. It functions in the pathway organic acid metabolism; propanoate degradation. In terms of biological role, involved in the catabolism of short chain fatty acids (SCFA) via the tricarboxylic acid (TCA)(acetyl degradation route) and probably via the 2-methylcitrate cycle I (propionate degradation route). Catalyzes the reversible isomerization of citrate to isocitrate via cis-aconitate. Could catalyze the hydration of 2-methyl-cis-aconitate to yield (2R,3S)-2-methylisocitrate. The apo form of AcnA functions as a RNA-binding regulatory protein. This Bradyrhizobium diazoefficiens (strain JCM 10833 / BCRC 13528 / IAM 13628 / NBRC 14792 / USDA 110) protein is Aconitate hydratase A.